A 408-amino-acid chain; its full sequence is MQPYHTLSRVLPFPDANQKAWWDKLGPMLLKAMQSQGYDTEAQYAQLGMVYKCVLPYLGEFPTVENDATRWKSFLCPYGIPIEPSLNISQGILRYAFEPIGPDVGTEKDPQNMNIIQDCLKGLTQHDDRIDTTLHAEFSSRLLLTEEESRQFATTGQFNFGPGQGMHGFAVDLKGSRPMFKGYFCAGIKSVVTGIPTGKLMLDAVREVDTEGRITQPLDKLEEYSANGIGKLMLCFMSVDMVNPHDARIKMYGLQQEVSREGIVDLWTLGGRVNTPTNQEGLELLLELWDLLQIPAGPRSVAISHCSVGQPPEYMLPTLVNWTLLPGHSDPMPQVYLVPFGLPDSHISDCLVTFFERRGWTDLARDYKKNLASYFPDIDFTQSRHVQEAISFSFRKGKPYLSIYMSLF.

Residues Arg-94, Lys-181, Tyr-183, Arg-248, Lys-250, Tyr-252, Gln-334, Tyr-336, Tyr-400, and Tyr-404 each contribute to the dimethylallyl diphosphate site.

This sequence belongs to the tryptophan dimethylallyltransferase family.

It carries out the reaction preechinulin + dimethylallyl diphosphate = tardioxopiperazine B + diphosphate. It catalyses the reaction preechinulin + dimethylallyl diphosphate = tardioxopiperazine A + diphosphate. The catalysed reaction is tardioxopiperazine A + dimethylallyl diphosphate = echinulin + diphosphate. The enzyme catalyses tardioxopiperazine A + dimethylallyl diphosphate = variecolorin L + diphosphate. It carries out the reaction neoechinulin A + dimethylallyl diphosphate = variecolorin G + diphosphate. It catalyses the reaction neoechinulin A + dimethylallyl diphosphate = isoechinulin A + diphosphate. The catalysed reaction is isoechinulin A + dimethylallyl diphosphate = dehydroechinulin + diphosphate. The enzyme catalyses neoechinulin B + dimethylallyl diphosphate = isoechinulin B + diphosphate. It functions in the pathway secondary metabolite biosynthesis. It participates in alkaloid biosynthesis. In terms of biological role, prenyltransferase; part of the gene cluster that mediates the biosynthesis of echinulin family alkaloid. The pathway begins with the biosynthesis of the cyclic dipeptide cyclo-L-Trp-L-Ala (cyclo-TA) by the NRPS echPS via condensation of L-alanine and L-tryptophan. The prenyltransferase echPT1 then catalyzes the first prenylation step, a reverse prenylation reaction at C2, to yield preechinulin. Preechinulin is the substrate of the cytochrome P450 monooxygenase echP450 that catalyzes the formation of the double bond between C10 and C11 to produce neoechulin A. The unique prenyltransferase echPT2 functions as a competitive enzyme with echP450 for preechinulin metabolization and uses preechinulin for effective regiospecific prenylations. Preechinulin is prenylated by echPT2 at C5 or C7. C7-prenylation leads to accumulation of tardioxopiperazine B without further modification by echPT2. In contrast, the C5-prenylated tardioxopiperazine A can be prenylated again by echPT2, predominantly at C7 to form echinulin or less frequently at C4 to give variecolorin L. EchPT2 also accepts neoechilunin A to produce varlecolorin G (prenylation at C5) or isoechinulin A (prenylation at C7). EchPT2 further converts isoechinulin A into dehydroechinulin. Moreover, a yet unidentified enzyme can also convert neoechilunin A into neoechilunin B by introducing a double bond between positions C14 and C17 and thus provides a further substrate to echPT2 for C5 and C7 prenylation. In Aspergillus ruber (Eurotium rubrum), this protein is Echinulin prenyltransferase 2.